Here is a 161-residue protein sequence, read N- to C-terminus: Ribonuclease H (161 aa).

Residues 3–144 (GLKQISIYTD…CDDLARQAAE (142 aa)) form the RNase H type-1 domain. Mg(2+) is bound by residues Asp-12, Glu-50, Asp-72, and Asp-136. The tract at residues 133-161 (ERCDDLARQAAEAKPSQEDSGYINQQAQA) is disordered. Polar residues predominate over residues 150 to 161 (EDSGYINQQAQA).

The protein belongs to the RNase H family. In terms of assembly, monomer. Mg(2+) is required as a cofactor.

It is found in the cytoplasm. It carries out the reaction Endonucleolytic cleavage to 5'-phosphomonoester.. In terms of biological role, endonuclease that specifically degrades the RNA of RNA-DNA hybrids. The chain is Ribonuclease H from Shewanella halifaxensis (strain HAW-EB4).